A 360-amino-acid polypeptide reads, in one-letter code: 3-dehydroquinate synthase (360 aa).

NAD(+) is bound by residues 69–74 (DGEKYK), 103–107 (GVVGD), 127–128 (TT), K140, K149, and 167–170 (TLDT). Positions 182, 246, and 263 each coordinate Zn(2+).

Belongs to the sugar phosphate cyclases superfamily. Dehydroquinate synthase family. Co(2+) serves as cofactor. It depends on Zn(2+) as a cofactor. Requires NAD(+) as cofactor.

Its subcellular location is the cytoplasm. The catalysed reaction is 7-phospho-2-dehydro-3-deoxy-D-arabino-heptonate = 3-dehydroquinate + phosphate. Its pathway is metabolic intermediate biosynthesis; chorismate biosynthesis; chorismate from D-erythrose 4-phosphate and phosphoenolpyruvate: step 2/7. Functionally, catalyzes the conversion of 3-deoxy-D-arabino-heptulosonate 7-phosphate (DAHP) to dehydroquinate (DHQ). The polypeptide is 3-dehydroquinate synthase (Vesicomyosocius okutanii subsp. Calyptogena okutanii (strain HA)).